A 517-amino-acid chain; its full sequence is General transcription factor IIF subunit 1 (517 aa).

Alanine 2 is modified (N-acetylalanine). Threonine 156 bears the Phosphothreonine mark. Positions 178 to 466 (QQRRLKDQDQ…DAVRRYLTRK (289 aa)) are disordered. Phosphoserine occurs at positions 217, 218, 221, and 224. Over residues 232-251 (PKAKKKAPLAKGGRKKKKKK) the composition is skewed to basic residues. 2 stretches are compositionally biased toward acidic residues: residues 255–270 (DEAF…EGQE) and 303–325 (EQSD…EEEE). Residue threonine 331 is modified to Phosphothreonine. Residues 343–355 (EESDSSEESDIDS) are compositionally biased toward acidic residues. The span at 364 to 374 (AKKKTPPKRER) shows a compositional bias: basic residues. A phosphoserine mark is found at serine 377, serine 380, serine 381, and serine 385. The segment covering 377–391 (SGGSSRGNSRPGTPS) has biased composition (low complexity). Threonine 389 carries the phosphothreonine modification. Serine 391 is subject to Phosphoserine. The residue at position 407 (lysine 407) is an N6-acetyllysine. A compositionally biased stretch (polar residues) spans 428-452 (GPQSLSGKSTPQPPSGKTTPNSGDV). Serine 431, serine 433, and serine 436 each carry phosphoserine. Phosphothreonine is present on residues threonine 437 and threonine 446. The residue at position 449 (serine 449) is a Phosphoserine. Zn(2+)-binding residues include glutamate 503, histidine 512, and glutamate 517.

Belongs to the TFIIF alpha subunit family. Heterodimer of an alpha and a beta subunit. Interacts with GTF2F2, CTDP1, TAF6/TAFII80 and URI1. Interacts with GTF2B (via C-terminus and preferentially via acetylated form); this interaction prevents binding of GTF2B to GTF2F2. Part of TBP-based Pol II pre-initiation complex (PIC), in which Pol II core assembles with general transcription factors and other specific initiation factors including GTF2E1, GTF2E2, GTF2F1, GTF2F2, TCEA1, ERCC2, ERCC3, GTF2H2, GTF2H3, GTF2H4, GTF2H5, GTF2A1, GTF2A2, GTF2B and TBP; this large multi-subunit PIC complex mediates DNA unwinding and targets Pol II core to the transcription start site where the first phosphodiester bond forms. Phosphorylated on Ser and other residues by TAF1 and casein kinase II-like kinases.

It is found in the nucleus. TFIIF is a general transcription initiation factor that binds to RNA polymerase II and helps to recruit it to the initiation complex in collaboration with TFIIB. It promotes transcription elongation. The polypeptide is General transcription factor IIF subunit 1 (GTF2F1) (Homo sapiens (Human)).